Consider the following 469-residue polypeptide: 3-isopropylmalate dehydratase large subunit (469 aa).

Residues Cys-350, Cys-410, and Cys-413 each contribute to the [4Fe-4S] cluster site.

This sequence belongs to the aconitase/IPM isomerase family. LeuC type 1 subfamily. Heterodimer of LeuC and LeuD. [4Fe-4S] cluster is required as a cofactor.

It catalyses the reaction (2R,3S)-3-isopropylmalate = (2S)-2-isopropylmalate. The protein operates within amino-acid biosynthesis; L-leucine biosynthesis; L-leucine from 3-methyl-2-oxobutanoate: step 2/4. Functionally, catalyzes the isomerization between 2-isopropylmalate and 3-isopropylmalate, via the formation of 2-isopropylmaleate. This Chelativorans sp. (strain BNC1) protein is 3-isopropylmalate dehydratase large subunit.